The primary structure comprises 946 residues: Bifunctional glutamine synthetase adenylyltransferase/adenylyl-removing enzyme (946 aa).

The interval 1–440 (MKPLSSPLQQ…VFNELIGDDE (440 aa)) is adenylyl removase. The segment at 449–946 (SEQWRELWQD…ASWQKWLVEE (498 aa)) is adenylyl transferase.

The protein belongs to the GlnE family. The cofactor is Mg(2+).

It catalyses the reaction [glutamine synthetase]-O(4)-(5'-adenylyl)-L-tyrosine + phosphate = [glutamine synthetase]-L-tyrosine + ADP. The catalysed reaction is [glutamine synthetase]-L-tyrosine + ATP = [glutamine synthetase]-O(4)-(5'-adenylyl)-L-tyrosine + diphosphate. Its function is as follows. Involved in the regulation of glutamine synthetase GlnA, a key enzyme in the process to assimilate ammonia. When cellular nitrogen levels are high, the C-terminal adenylyl transferase (AT) inactivates GlnA by covalent transfer of an adenylyl group from ATP to specific tyrosine residue of GlnA, thus reducing its activity. Conversely, when nitrogen levels are low, the N-terminal adenylyl removase (AR) activates GlnA by removing the adenylyl group by phosphorolysis, increasing its activity. The regulatory region of GlnE binds the signal transduction protein PII (GlnB) which indicates the nitrogen status of the cell. The sequence is that of Bifunctional glutamine synthetase adenylyltransferase/adenylyl-removing enzyme from Escherichia coli (strain K12 / MC4100 / BW2952).